Consider the following 156-residue polypeptide: Small ribosomal subunit protein uS7 (156 aa).

The protein belongs to the universal ribosomal protein uS7 family. As to quaternary structure, part of the 30S ribosomal subunit. Contacts proteins S9 and S11.

Functionally, one of the primary rRNA binding proteins, it binds directly to 16S rRNA where it nucleates assembly of the head domain of the 30S subunit. Is located at the subunit interface close to the decoding center, probably blocks exit of the E-site tRNA. This chain is Small ribosomal subunit protein uS7, found in Corynebacterium jeikeium (strain K411).